A 295-amino-acid polypeptide reads, in one-letter code: Ribosomal RNA small subunit methyltransferase A (295 aa).

Residues Asn-31, Leu-33, Gly-58, Glu-79, Asp-104, and Asn-129 each contribute to the S-adenosyl-L-methionine site.

The protein belongs to the class I-like SAM-binding methyltransferase superfamily. rRNA adenine N(6)-methyltransferase family. RsmA subfamily.

The protein localises to the cytoplasm. It catalyses the reaction adenosine(1518)/adenosine(1519) in 16S rRNA + 4 S-adenosyl-L-methionine = N(6)-dimethyladenosine(1518)/N(6)-dimethyladenosine(1519) in 16S rRNA + 4 S-adenosyl-L-homocysteine + 4 H(+). Specifically dimethylates two adjacent adenosines (A1518 and A1519) in the loop of a conserved hairpin near the 3'-end of 16S rRNA in the 30S particle. May play a critical role in biogenesis of 30S subunits. In Leuconostoc mesenteroides subsp. mesenteroides (strain ATCC 8293 / DSM 20343 / BCRC 11652 / CCM 1803 / JCM 6124 / NCDO 523 / NBRC 100496 / NCIMB 8023 / NCTC 12954 / NRRL B-1118 / 37Y), this protein is Ribosomal RNA small subunit methyltransferase A.